A 1311-amino-acid chain; its full sequence is Zinc finger protein 521 (1311 aa).

Positions M1–R10 are enriched in basic residues. Residues M1–D37 form a disordered region. A compositionally biased stretch (basic and acidic residues) spans S11–D21. A C2H2-type 1; degenerate zinc finger spans residues H47–I67. The segment at D81–G108 is disordered. Low complexity predominate over residues P87 to G102. 7 C2H2-type zinc fingers span residues Y118 to H140, F146 to H168, Y174 to H196, Y202 to H224, Q246 to H269, L281 to H304, and N310 to H332. Residues V349–T358 show a composition bias toward low complexity. Residues V349–S397 form a disordered region. Polar residues-rich tracts occupy residues P359–M370 and A387–S397. A C2H2-type 9; degenerate zinc finger spans residues Y405–H429. 3 C2H2-type zinc fingers span residues H437–H460, Y477–H500, and F513–H536. S546 is subject to Phosphoserine. The C2H2-type 13; atypical zinc finger occupies Y560–H585. S605 and S608 each carry phosphoserine. 7 consecutive C2H2-type zinc fingers follow at residues Y634–H656, L664–H686, Y694–H717, F722–H745, Y752–H775, H783–H805, and Y809–H832. A disordered region spans residues T863–S882. Residues Y886–D908 form a C2H2-type 21; degenerate zinc finger. 3 C2H2-type zinc fingers span residues Y930–H952, Y959–H981, and F1020–H1042. A C2H2-type 25; degenerate zinc finger spans residues Y1065–L1083. The segment at T1138–H1161 adopts a C2H2-type 26 zinc-finger fold. K1146 is covalently cross-linked (Glycyl lysine isopeptide (Lys-Gly) (interchain with G-Cter in SUMO2)). The span at S1168–V1178 shows a compositional bias: polar residues. Residues S1168–Q1188 are disordered. 4 consecutive C2H2-type zinc fingers follow at residues Y1195–H1217, H1225–H1247, F1256–H1279, and Y1286–H1309.

It belongs to the krueppel C2H2-type zinc-finger protein family. Interacts with EBF1. Interacts with SMAD1 and SMAD4. Predominantly expressed in hematopoietic cells. Present in organs and tissues that contain stem and progenitor cells, myeloid and/or lymphoid: placenta, spleen, lymph nodes, thymus, bone marrow and fetal liver. Within the hematopoietic system, it is abundant in CD34(+) cells but undetectable in mature peripheral blood leukocytes, and its levels rapidly decrease during the differentiation of CD34(+) cells in response to hemopoietins.

The protein localises to the nucleus. Functionally, transcription factor that can both act as an activator or a repressor depending on the context. Involved in BMP signaling and in the regulation of the immature compartment of the hematopoietic system. Associates with SMADs in response to BMP2 leading to activate transcription of BMP target genes. Acts as a transcriptional repressor via its interaction with EBF1, a transcription factor involved specification of B-cell lineage; this interaction preventing EBF1 to bind DNA and activate target genes. The sequence is that of Zinc finger protein 521 (ZNF521) from Homo sapiens (Human).